A 330-amino-acid polypeptide reads, in one-letter code: Putative protein N-methyltransferase FAM86B1 (330 aa).

Residues tryptophan 139, 165 to 167 (GSG), tryptophan 228, and alanine 247 each bind S-adenosyl-L-methionine.

This sequence belongs to the class I-like SAM-binding methyltransferase superfamily. EEF2KMT family.

The protein is Putative protein N-methyltransferase FAM86B1 of Homo sapiens (Human).